A 392-amino-acid polypeptide reads, in one-letter code: FK506-binding protein 4 (392 aa).

Disordered regions lie at residues 58–116 (NPEL…NEID) and 161–284 (GNYV…PKTK). 3 stretches are compositionally biased toward acidic residues: residues 73-86 (DGLEEDESESEQEA), 104-116 (SESEDSEDENEID), and 172-219 (SDSD…DASD). Ser-80 and Ser-82 each carry phosphoserine. 2 stretches are compositionally biased toward basic and acidic residues: residues 220 to 234 (IESRLDELVKKDEKK) and 252 to 279 (SAKPAEKKQTTKKDKKAEKVKDSEESKP). The 87-residue stretch at 306-392 (GTRVGMRYVG…TFDVKLVSMK (87 aa)) folds into the PPIase FKBP-type domain.

Belongs to the FKBP-type PPIase family. FKBP3/4 subfamily. Binds to histones H3 and H4. Interacts with NOP53.

The protein localises to the nucleus. The enzyme catalyses [protein]-peptidylproline (omega=180) = [protein]-peptidylproline (omega=0). In terms of biological role, PPIase that acts as a histone chaperone. Histone proline isomerase that increases the rate of cis-trans isomerization at 'Pro-17' (H3P16), 'Pro-31' (H3P30) and 'Pro-39 (H3P38) on the histone H3 N-terminal tail. H3P16 and H3P30 are the major proline targets with little activity shown against H3P38. H3P38 isomerization influences SET2-mediated H3K36 methylation thereby regulating gene expression. The polypeptide is FK506-binding protein 4 (Saccharomyces cerevisiae (strain ATCC 204508 / S288c) (Baker's yeast)).